The following is a 382-amino-acid chain: Sphingoid long-chain base transporter RSB1 (382 aa).

At 1-34 (MSNATNNTLGSLLPQLEAAANSNSLYGGMVPNLR) the chain is on the extracellular side. 2 N-linked (GlcNAc...) asparagine glycosylation sites follow: Asn-3 and Asn-6. A helical transmembrane segment spans residues 35–55 (FNITMIVIWGILLTIHVVQLL). At 56 to 57 (MR) the chain is on the cytoplasmic side. A helical membrane pass occupies residues 58–78 (QYWFSIAFICTGILEVLGFIG). Residues 79–90 (RTWSHSNVADMD) are Extracellular-facing. Residues 91 to 111 (AFLLNMICLTIAPVFTMGGIY) traverse the membrane as a helical segment. At 112-135 (YQLAKLIEVYGHRFSLLPSPMAYS) the chain is on the cytoplasmic side. A helical membrane pass occupies residues 136–156 (FIFICSDIVSLVVQAVGGGLC). Over 157-171 (GVAVTDGTSTTTGNH) the chain is Extracellular. A helical membrane pass occupies residues 172–192 (VFIAGLAIQVASMAIFLMLWF). Topologically, residues 193–241 (HFLFRIYISVRWEHINSRPISLSLLKISQTEVDYLYREKFHFLRLEPKR) are cytoplasmic. Residues 242–262 (WVFHYFNLAMTVAVLTIFTRC) traverse the membrane as a helical segment. Over 263–281 (CYRLAELVVGWDGYLITHE) the chain is Extracellular. The helical transmembrane segment at 282-302 (WYFIILDALMMAIATVTLTIF) threads the bilayer. The Cytoplasmic segment spans residues 303–382 (HPGFAFKGRS…LFSSKKKAKL (80 aa)).

The protein belongs to the lipid-translocating exporter (LTE) (TC 9.A.26.1) family.

It is found in the cell membrane. Functionally, catalyzes the ATP-dependent translocation of sphingoid long-chain bases (LCBs) from the cytoplasmic site toward the extracytoplasmic side of the membrane (flip-flop). Involved in the establishment of the functional lipid asymmetry of the plasma membrane. Regulates intracellular levels of LCBs, sphingolipid precursors that are growth inhibitory at increased levels. The protein is Sphingoid long-chain base transporter RSB1 (RSB1) of Saccharomyces cerevisiae (strain AWRI1631) (Baker's yeast).